We begin with the raw amino-acid sequence, 657 residues long: Glycogen debranching enzyme (657 aa).

The active-site Nucleophile is the Asp-336. Catalysis depends on Glu-371, which acts as the Proton donor. The disordered stretch occupies residues 460–481 (ANGEENRDGTNNNYSNNHGKEG).

The protein belongs to the glycosyl hydrolase 13 family.

It carries out the reaction Hydrolysis of (1-&gt;6)-alpha-D-glucosidic linkages to branches with degrees of polymerization of three or four glucose residues in limit dextrin.. The protein operates within glycan degradation; glycogen degradation. Removes maltotriose and maltotetraose chains that are attached by 1,6-alpha-linkage to the limit dextrin main chain, generating a debranched limit dextrin. In Escherichia coli O157:H7, this protein is Glycogen debranching enzyme.